A 953-amino-acid chain; its full sequence is Valine--tRNA ligase (953 aa).

The short motif at 42–52 (PNVTGSLHMGH) is the 'HIGH' region element. The 'KMSKS' region motif lies at 554–558 (KMSKS). K557 serves as a coordination point for ATP. Positions 884-953 (LIDKDAELAR…EAQKETIAAL (70 aa)) form a coiled coil.

The protein belongs to the class-I aminoacyl-tRNA synthetase family. ValS type 1 subfamily. As to quaternary structure, monomer.

The protein resides in the cytoplasm. It catalyses the reaction tRNA(Val) + L-valine + ATP = L-valyl-tRNA(Val) + AMP + diphosphate. In terms of biological role, catalyzes the attachment of valine to tRNA(Val). As ValRS can inadvertently accommodate and process structurally similar amino acids such as threonine, to avoid such errors, it has a 'posttransfer' editing activity that hydrolyzes mischarged Thr-tRNA(Val) in a tRNA-dependent manner. The chain is Valine--tRNA ligase from Photobacterium profundum (strain SS9).